The chain runs to 320 residues: Beta-ketoacyl-[acyl-carrier-protein] synthase III (320 aa).

Catalysis depends on residues Cys-114 and His-247. The segment at 248–252 (QANRR) is ACP-binding. Asn-277 is a catalytic residue.

This sequence belongs to the thiolase-like superfamily. FabH family. In terms of assembly, homodimer.

Its subcellular location is the cytoplasm. The catalysed reaction is malonyl-[ACP] + acetyl-CoA + H(+) = 3-oxobutanoyl-[ACP] + CO2 + CoA. It functions in the pathway lipid metabolism; fatty acid biosynthesis. In terms of biological role, catalyzes the condensation reaction of fatty acid synthesis by the addition to an acyl acceptor of two carbons from malonyl-ACP. Catalyzes the first condensation reaction which initiates fatty acid synthesis and may therefore play a role in governing the total rate of fatty acid production. Possesses both acetoacetyl-ACP synthase and acetyl transacylase activities. Its substrate specificity determines the biosynthesis of branched-chain and/or straight-chain of fatty acids. In Neisseria meningitidis serogroup B (strain ATCC BAA-335 / MC58), this protein is Beta-ketoacyl-[acyl-carrier-protein] synthase III.